Here is a 458-residue protein sequence, read N- to C-terminus: MTFRKSFDCYDFYDRAKVGEKCTQDDWDLMKIPMKAMELKQKYGLDFKGEFIPTDKDMMEKLFKAGFEMLLECGIYCTDTHRIVKYTEDEIWDAINNVQKEFVLGTGRDAVNVRKRSVGDKAKPIVQGGPTGSPISEDVFMPVHMSYALEKEVDTIVNGVMTSVRGKSPIPKSPYEVLAAKTETRLIKNACAMAGRPGMGVOGPETSLSAQGNISADCTGGMTCTDSHEVSQLNELKIDLDAISVIAHYKGNSDIIMDEQMPIFGGYAGGIEETTIVDVATHINAVLMSSASWHLDGPVHIRWGSTNTRETLMIAGWACATISEFTDILSGNQYYPCAGPCTEMCLLEASAQSITDTASGREILSGVASAKGVVTDKTTGMEARMMGEVARATAGVEISEVNVILDKLVSLYEKNYASAPAGKTFQECYDVKTVTPTEEYMQVYDGARKKLEDLGLVF.

Position 202 (O202) is a non-standard amino acid, pyrrolysine.

The protein belongs to the monomethylamine methyltransferase family. Dimer of homotrimers. Can form a complex with MtmC (MtmC1 or MtmC2).

The enzyme catalyses Co(I)-[methylamine-specific corrinoid protein] + methylamine + H(+) = methyl-Co(III)-[methylamine-specific corrinoid protein] + NH4(+). It participates in one-carbon metabolism; methanogenesis from methylamine. Functionally, catalyzes the transfer of the methyl group from monomethylamine to the corrinoid cofactor of MtmC (MtmC1 or MtmC2). In Methanosarcina barkeri, this protein is Monomethylamine methyltransferase MtmB1 (mtmB1).